The following is a 683-amino-acid chain: MSRHHRPFTWGGAQPGASFSNPTSPTLEASTFGFEPSVPDIYRRAWILVTKDASAELFADTSDADIHLGLLHKLLTSAGGLGPGSAEQIVNSACKGSRCSRSDFYCALGLLHQMQQGEELDVHLVQQRLTMGSLSAPVLDLSDATLNPHSHHTFPPTAPSGPSRIDPRPSTFMREMSDPWNANSSGSYNGIDTRPAYNQYDAMPQQYDTLNSHDSALPAGFAGNVSSGSFERIKFNAGDDRRSHQLLAHNQGSSTDTFLAPDRTEARARQPNTRQERPFSYMSDTAETNAVDAAEDPAADLPEDQVTVRLRSELEGFIIKHNVYIVSSSLRKSQVTRRYSDWLWLAECLVKRYPFRCLPVLPPKRIAMPIAGRHLSADDLFIERRRRGLERFLRMLTCHPMLREDKLVEVFFTEPRPIAEWKSSAPALFLDEEGLIKTVDEAERMSIPEDLQLKLTQQRQAIPELLERWTAMVALFERIVKRNDAAAADYSRLNFSLLSVIETSARRWRPGSDNGKKTEEIMSTMASIFQDHSDTTSSRVSAVSLSTLEGMKAQRDLILSFRDLIGRIDRQLVDPIDMLKKRIEASQKRITTLAASANSNSASIQQEQATLSAQVKQDTQSIQKYLNRRIHAKKTVWEELIWFHHRFKAVEEDMQKFVRDETFFLSTLTRMWEATEMKMKMIR.

Disordered stretches follow at residues 1 to 25 and 246 to 276; these read MSRH…PTSP and LLAH…TRQE. Positions 248 to 257 are enriched in polar residues; that stretch reads AHNQGSSTDT. A PX domain is found at 302-418; sequence PEDQVTVRLR…EVFFTEPRPI (117 aa). A 1,2-diacyl-sn-glycero-3-phospho-(1D-myo-inositol-3-phosphate) contacts are provided by Arg338, Ser340, Lys364, and Arg385.

This sequence belongs to the sorting nexin family.

It localises to the cytoplasm. Its subcellular location is the membrane. In terms of biological role, required for vacuolar protein sorting. The chain is Sorting nexin MVP1 (MVP1) from Mycosarcoma maydis (Corn smut fungus).